The primary structure comprises 405 residues: 26S proteasome regulatory subunit 8 homolog (405 aa).

Threonine 2 is modified (N-acetylthreonine). Residue 189–196 (GPPGTGKT) participates in ATP binding.

Belongs to the AAA ATPase family. May form a homodimer or a heterodimer with a related family member. Interacts with OLA1, TMA17, and UBR1. Post-translationally, N-acetylated by NAT1.

The protein resides in the cytoplasm. It is found in the nucleus. The 26S proteasome is involved in the ATP-dependent degradation of ubiquitinated proteins. The regulatory (or ATPase) complex confers ATP dependency and substrate specificity to the 26S complex. The sequence is that of 26S proteasome regulatory subunit 8 homolog (RPT6) from Saccharomyces cerevisiae (strain ATCC 204508 / S288c) (Baker's yeast).